We begin with the raw amino-acid sequence, 946 residues long: DNA primase (946 aa).

The tract at residues 596 to 626 (RDTEEDEDGKEDKNNVPDNGVFQKTTSSVDT) is disordered. Over residues 617 to 626 (FQKTTSSVDT) the composition is skewed to polar residues. The CHC2-type zinc-finger motif lies at 881–920 (CLNYTHRNPQETVQVFIDLRTEHSYALWASLWSRCFTKKC).

It belongs to the herpesviridae DNA primase family. In terms of assembly, associates with the helicase and the primase-associated factor to form the helicase-primase factor.

It localises to the host nucleus. Functionally, essential component of the helicase/primase complex. Unwinds the DNA at the replication forks and generates single-stranded DNA for both leading and lagging strand synthesis. The primase initiates primer synthesis and thereby produces large amount of short RNA primers on the lagging strand that the polymerase elongates using dNTPs. The sequence is that of DNA primase (UL70) from Human cytomegalovirus (strain AD169) (HHV-5).